Reading from the N-terminus, the 173-residue chain is Alpha-crystallin A chain (173 aa).

Methionine 1 is subject to N-acetylmethionine. Residues 1–63 (MDVTIQHPWF…RTVLDSGVSE (63 aa)) form a required for complex formation with BFSP1 and BFSP2 region. Position 6 is a deamidated glutamine; partial (glutamine 6). Serine 45 is modified (phosphoserine). Glutamine 50 bears the Deamidated glutamine; partial mark. Residues 52-162 (LFRTVLDSGV…GHSERAIPVS (111 aa)) enclose the sHSP domain. The residue at position 70 (lysine 70) is an N6-acetyllysine. Glutamine 90 carries the deamidated glutamine; partial modification. Position 99 is an N6-acetyllysine (lysine 99). Histidine 100 serves as a coordination point for Zn(2+). Residue asparagine 101 is modified to Deamidated asparagine; partial. Zn(2+) is bound by residues glutamate 102 and histidine 107. Residue serine 122 is modified to Phosphoserine. At asparagine 123 the chain carries Deamidated asparagine; partial. The interval 145 to 173 (KVQSGLDAGHSERAIPVSREEKPSSAPSS) is disordered. Glutamine 147 carries the post-translational modification Deamidated glutamine; partial. Residues 153-167 (GHSERAIPVSREEKP) show a composition bias toward basic and acidic residues. Residue histidine 154 coordinates Zn(2+). Residue serine 162 is glycosylated (O-linked (GlcNAc) serine).

Belongs to the small heat shock protein (HSP20) family. Heteromer composed of three CRYAA and one CRYAB subunits. Inter-subunit bridging via zinc ions enhances stability, which is crucial as there is no protein turn over in the lens. Can also form homodimers and homotetramers (dimers of dimers) which serve as the building blocks of homooligomers. Within homooligomers, the zinc-binding motif is created from residues of 3 different molecules. His-100 and Glu-102 from one molecule are ligands of the zinc ion, and His-107 and His-154 residues from additional molecules complete the site with tetrahedral coordination geometry. Part of a complex required for lens intermediate filament formation composed of BFSP1, BFSP2 and CRYAA. Acetylation at Lys-70 may increase chaperone activity. Post-translationally, undergoes age-dependent proteolytical cleavage at the C-terminus.

It localises to the cytoplasm. It is found in the nucleus. Its function is as follows. Contributes to the transparency and refractive index of the lens. Acts as a chaperone, preventing aggregation of various proteins under a wide range of stress conditions. Required for the correct formation of lens intermediate filaments as part of a complex composed of BFSP1, BFSP2 and CRYAA. The polypeptide is Alpha-crystallin A chain (CRYAA) (Eulemur fulvus fulvus (Brown lemur)).